A 379-amino-acid chain; its full sequence is 1-deoxy-D-xylulose 5-phosphate reductoisomerase (379 aa).

Thr-10, Gly-11, Ser-12, Ile-13, Arg-38, Asn-39, and Asn-121 together coordinate NADPH. Residue Lys-122 coordinates 1-deoxy-D-xylulose 5-phosphate. Residue Glu-123 coordinates NADPH. Residue Asp-147 coordinates Mn(2+). 4 residues coordinate 1-deoxy-D-xylulose 5-phosphate: Ser-148, Glu-149, Ser-173, and His-196. Residue Glu-149 coordinates Mn(2+). Residue Gly-202 participates in NADPH binding. 1-deoxy-D-xylulose 5-phosphate-binding residues include Ser-209, Asn-214, Lys-215, and Glu-218. Glu-218 contributes to the Mn(2+) binding site.

It belongs to the DXR family. It depends on Mg(2+) as a cofactor. The cofactor is Mn(2+).

It carries out the reaction 2-C-methyl-D-erythritol 4-phosphate + NADP(+) = 1-deoxy-D-xylulose 5-phosphate + NADPH + H(+). It participates in isoprenoid biosynthesis; isopentenyl diphosphate biosynthesis via DXP pathway; isopentenyl diphosphate from 1-deoxy-D-xylulose 5-phosphate: step 1/6. Catalyzes the NADPH-dependent rearrangement and reduction of 1-deoxy-D-xylulose-5-phosphate (DXP) to 2-C-methyl-D-erythritol 4-phosphate (MEP). The polypeptide is 1-deoxy-D-xylulose 5-phosphate reductoisomerase (Chlamydia muridarum (strain MoPn / Nigg)).